A 114-amino-acid chain; its full sequence is MSTTSRVGSNEVKMEGQKRKVVSDPTHVTLKVKGQDEEDFRVFWVRRNAKLLKMMELYTKMRGIEWNTFRFLFDGSRIREYHTPDELERKDGDEIDAMLCQQSGFGPSSIKFRV.

Residues 1-20 (MSTTSRVGSNEVKMEGQKRK) form a disordered region. A Ubiquitin-like domain is found at 26 to 104 (THVTLKVKGQ…IDAMLCQQSG (79 aa)). Glycine 104 participates in a covalent cross-link: Glycyl lysine isopeptide (Gly-Lys) (interchain with K-? in acceptor proteins).

It belongs to the ubiquitin family. SUMO subfamily. Interacts with SAE2, SCE1, SIZ1 and MMS21 Covalently attached to a number of proteins.

It is found in the nucleus. Its subcellular location is the cytoplasm. Functionally, ubiquitin-like protein which can be covalently attached to target lysines as a monomer. Does not seem to be involved in protein degradation and may function as an antagonist of ubiquitin in the degradation process. The protein is Putative small ubiquitin-related modifier 4 (SUMO4) of Arabidopsis thaliana (Mouse-ear cress).